Consider the following 567-residue polypeptide: Arginine--tRNA ligase (567 aa).

A 'HIGH' region motif is present at residues 121–131 (ANPNGPLHVGH).

Belongs to the class-I aminoacyl-tRNA synthetase family.

The protein resides in the cytoplasm. It carries out the reaction tRNA(Arg) + L-arginine + ATP = L-arginyl-tRNA(Arg) + AMP + diphosphate. The sequence is that of Arginine--tRNA ligase from Methanosarcina acetivorans (strain ATCC 35395 / DSM 2834 / JCM 12185 / C2A).